The chain runs to 211 residues: Guanylate kinase (211 aa).

A Guanylate kinase-like domain is found at 5–185 (GLLLILSSPS…AEEQLKMILS (181 aa)). Position 12–19 (12–19 (SPSGAGKS)) interacts with ATP.

This sequence belongs to the guanylate kinase family.

It is found in the cytoplasm. It catalyses the reaction GMP + ATP = GDP + ADP. Essential for recycling GMP and indirectly, cGMP. The sequence is that of Guanylate kinase from Cereibacter sphaeroides (strain ATCC 17023 / DSM 158 / JCM 6121 / CCUG 31486 / LMG 2827 / NBRC 12203 / NCIMB 8253 / ATH 2.4.1.) (Rhodobacter sphaeroides).